We begin with the raw amino-acid sequence, 81 residues long: Large ribosomal subunit protein bL27 (81 aa).

Residues 1–11 (MATSKSGGSSK) are compositionally biased toward polar residues. Residues 1-20 (MATSKSGGSSKNGRDSISKR) are disordered.

This sequence belongs to the bacterial ribosomal protein bL27 family.

The protein is Large ribosomal subunit protein bL27 of Borreliella afzelii (strain PKo) (Borrelia afzelii).